Reading from the N-terminus, the 437-residue chain is Phosphoribosylamine--glycine ligase (437 aa).

Residues 110 to 322 (KNLLRSADIP…LVEVMQAVVD (213 aa)) enclose the ATP-grasp domain. 142 to 203 (EPTDPVNVVV…EERLTGPEVS (62 aa)) provides a ligand contact to ATP. E292 and N294 together coordinate Mg(2+).

The protein belongs to the GARS family. It depends on Mg(2+) as a cofactor. The cofactor is Mn(2+).

It carries out the reaction 5-phospho-beta-D-ribosylamine + glycine + ATP = N(1)-(5-phospho-beta-D-ribosyl)glycinamide + ADP + phosphate + H(+). It participates in purine metabolism; IMP biosynthesis via de novo pathway; N(1)-(5-phospho-D-ribosyl)glycinamide from 5-phospho-alpha-D-ribose 1-diphosphate: step 2/2. This chain is Phosphoribosylamine--glycine ligase, found in Rhodopirellula baltica (strain DSM 10527 / NCIMB 13988 / SH1).